The sequence spans 298 residues: ATP phosphoribosyltransferase (298 aa).

It belongs to the ATP phosphoribosyltransferase family. Long subfamily. Mg(2+) is required as a cofactor.

Its subcellular location is the cytoplasm. The catalysed reaction is 1-(5-phospho-beta-D-ribosyl)-ATP + diphosphate = 5-phospho-alpha-D-ribose 1-diphosphate + ATP. It participates in amino-acid biosynthesis; L-histidine biosynthesis; L-histidine from 5-phospho-alpha-D-ribose 1-diphosphate: step 1/9. With respect to regulation, feedback inhibited by histidine. Catalyzes the condensation of ATP and 5-phosphoribose 1-diphosphate to form N'-(5'-phosphoribosyl)-ATP (PR-ATP). Has a crucial role in the pathway because the rate of histidine biosynthesis seems to be controlled primarily by regulation of HisG enzymatic activity. This is ATP phosphoribosyltransferase from Aeromonas salmonicida (strain A449).